The following is a 214-amino-acid chain: uncharacterized protein (214 aa).

The chain crosses the membrane as a helical span at residues Leu10–Ser30. Over residues Ser147 to Pro157 the composition is skewed to polar residues. The disordered stretch occupies residues Ser147–Phe166.

The protein resides in the membrane. This is an uncharacterized protein from Schizosaccharomyces pombe (strain 972 / ATCC 24843) (Fission yeast).